Consider the following 396-residue polypeptide: 1-deoxy-D-xylulose 5-phosphate reductoisomerase (396 aa).

Residues threonine 10, glycine 11, serine 12, isoleucine 13, glutamine 38, and asparagine 124 each coordinate NADPH. A 1-deoxy-D-xylulose 5-phosphate-binding site is contributed by lysine 125. Glutamate 126 contacts NADPH. Aspartate 150 is a Mn(2+) binding site. Serine 151, glutamate 152, serine 179, and histidine 202 together coordinate 1-deoxy-D-xylulose 5-phosphate. A Mn(2+)-binding site is contributed by glutamate 152. Residue glycine 208 participates in NADPH binding. Residues serine 215, asparagine 220, lysine 221, and glutamate 224 each contribute to the 1-deoxy-D-xylulose 5-phosphate site. Position 224 (glutamate 224) interacts with Mn(2+).

Belongs to the DXR family. Mg(2+) serves as cofactor. Requires Mn(2+) as cofactor.

The enzyme catalyses 2-C-methyl-D-erythritol 4-phosphate + NADP(+) = 1-deoxy-D-xylulose 5-phosphate + NADPH + H(+). It functions in the pathway isoprenoid biosynthesis; isopentenyl diphosphate biosynthesis via DXP pathway; isopentenyl diphosphate from 1-deoxy-D-xylulose 5-phosphate: step 1/6. In terms of biological role, catalyzes the NADPH-dependent rearrangement and reduction of 1-deoxy-D-xylulose-5-phosphate (DXP) to 2-C-methyl-D-erythritol 4-phosphate (MEP). This is 1-deoxy-D-xylulose 5-phosphate reductoisomerase from Ralstonia pickettii (strain 12J).